The primary structure comprises 365 residues: 2-aminoethylphosphonate--pyruvate transaminase (365 aa).

Lysine 194 carries the N6-(pyridoxal phosphate)lysine modification.

The protein belongs to the class-V pyridoxal-phosphate-dependent aminotransferase family. PhnW subfamily. As to quaternary structure, homodimer. It depends on pyridoxal 5'-phosphate as a cofactor.

The enzyme catalyses (2-aminoethyl)phosphonate + pyruvate = phosphonoacetaldehyde + L-alanine. In terms of biological role, involved in phosphonate degradation. This chain is 2-aminoethylphosphonate--pyruvate transaminase, found in Bacillus thuringiensis subsp. konkukian (strain 97-27).